A 2005-amino-acid polypeptide reads, in one-letter code: Chitin synthase 8 (2005 aa).

In terms of domain architecture, Myosin motor spans 5–773 (DEVAKLSQLT…AFRELEDELR (769 aa)). 108-115 (GDTSSGKS) serves as a coordination point for ATP. Asn-164, Asn-364, Asn-390, and Asn-546 each carry an N-linked (GlcNAc...) asparagine glycan. A disordered region spans residues 585 to 631 (QSVKPMRAPSTRRPNRGNTIKRTNTIKKADDDDSDEDAADAADASTS). Residues 615 to 624 (DDDSDEDAAD) show a composition bias toward acidic residues. The segment at 647-669 (LDLLLETLEDTKTWFTLCLRPND) is actin-binding. Transmembrane regions (helical) follow at residues 929-949 (KWVA…LSRF) and 965-985 (LAIN…IVVL). Asn-1076 carries N-linked (GlcNAc...) asparagine glycosylation. The next 3 membrane-spanning stretches (helical) occupy residues 1232 to 1252 (ILLA…LAAL), 1604 to 1624 (LIFT…IVFI), and 1626 to 1646 (LLST…IVLV). N-linked (GlcNAc...) asparagine glycosylation is present at Asn-1650. Helical transmembrane passes span 1653–1673 (VPLT…VIFL) and 1680–1700 (MIGW…FLPL). Residues Asn-1770 and Asn-1794 are each glycosylated (N-linked (GlcNAc...) asparagine). A disordered region spans residues 1796–1821 (SFGHSPSPSYGGTPSQFGAFAPGPGS). Residues 1797-1811 (FGHSPSPSYGGTPSQ) are compositionally biased toward polar residues. A glycan (N-linked (GlcNAc...) asparagine) is linked at Asn-1882. Positions 1912–1950 (FATAEQQQQQQQQQQAAGLSGSGGSKSPPREAVAGGLPS) are disordered. Residues 1917 to 1930 (QQQQQQQQQQAAGL) show a composition bias toward low complexity. Residues 1948-2003 (LPSDSQIKLDIRSLIAESDLTTITKKQLRAKLEQKYATSIESKKAFINSEIENVLS) enclose the DEK-C domain.

This sequence in the N-terminal section; belongs to the TRAFAC class myosin-kinesin ATPase superfamily. Myosin family. The protein in the C-terminal section; belongs to the chitin synthase family. Class V subfamily.

It is found in the cell membrane. The protein localises to the cytoplasmic vesicle membrane. It localises to the cell tip. It carries out the reaction [(1-&gt;4)-N-acetyl-beta-D-glucosaminyl](n) + UDP-N-acetyl-alpha-D-glucosamine = [(1-&gt;4)-N-acetyl-beta-D-glucosaminyl](n+1) + UDP + H(+). Polymerizes chitin, a structural polymer of the cell wall and septum, by transferring the sugar moiety of UDP-GlcNAc to the non-reducing end of the growing chitin polymer. Involved in mating tube and dikaryotic hyphae formation and required for the formation of invading hyphae during plant infection. The chain is Chitin synthase 8 from Mycosarcoma maydis (Corn smut fungus).